Reading from the N-terminus, the 222-residue chain is Vacuolar protein sorting-associated protein 2 homolog 2 (222 aa).

Coiled-coil stretches lie at residues 26-83 (RGIE…AQIR) and 143-222 (SEAI…LRRI). The tract at residues 179-222 (SSAPKGRIATKTAAPPASTAATNKNSESSEVDELEKRLASLRRI) is disordered. Positions 187–203 (ATKTAAPPASTAATNKN) are enriched in low complexity.

Belongs to the SNF7 family. Component of the endosomal sorting required for transport complex III (ESCRT-III), composed at least of VPS2, VPS20, VPS24 and VPS32. Interacts with CHMP1A, CHMP1B and VPS60-1.

Its subcellular location is the endosome. Component of the ESCRT-III complex, which is required for multivesicular bodies (MVBs) formation and sorting of endosomal cargo proteins into MVBs. The ESCRT-III complex is probably involved in the concentration of MVB cargo. The protein is Vacuolar protein sorting-associated protein 2 homolog 2 (VPS2.2) of Arabidopsis thaliana (Mouse-ear cress).